Reading from the N-terminus, the 247-residue chain is DNA polymerase sliding clamp (247 aa).

Belongs to the PCNA family. As to quaternary structure, homotrimer. The subunits circularize to form a toroid; DNA passes through its center. Replication factor C (RFC) is required to load the toroid on the DNA.

Sliding clamp subunit that acts as a moving platform for DNA processing. Responsible for tethering the catalytic subunit of DNA polymerase and other proteins to DNA during high-speed replication. The polypeptide is DNA polymerase sliding clamp (Methanocorpusculum labreanum (strain ATCC 43576 / DSM 4855 / Z)).